The following is a 203-amino-acid chain: Cardiotrophin-2 (203 aa).

A signal peptide spans 1-21 (MSCSLARLCLLTLLSPPLSSA). A glycan (N-linked (GlcNAc...) asparagine) is linked at N43.

Belongs to the IL-6 superfamily.

It localises to the secreted. Functionally, may have an important role in neuronal precursor development and maturation. The sequence is that of Cardiotrophin-2 (CTF2) from Pan troglodytes (Chimpanzee).